The sequence spans 235 residues: Ribonuclease 3 (235 aa).

One can recognise an RNase III domain in the interval 7–134 (LKDLQNKIEI…LIASIYLDKG (128 aa)). Residue E47 coordinates Mg(2+). The active site involves D51. The Mg(2+) site is built by D120 and E123. Residue E123 is part of the active site. The region spanning 161–230 (DYKTKLQEII…AKKAIENMEV (70 aa)) is the DRBM domain.

This sequence belongs to the ribonuclease III family. In terms of assembly, homodimer. Requires Mg(2+) as cofactor.

The protein localises to the cytoplasm. The enzyme catalyses Endonucleolytic cleavage to 5'-phosphomonoester.. Digests double-stranded RNA. Involved in the processing of primary rRNA transcript to yield the immediate precursors to the large and small rRNAs (23S and 16S). Processes some mRNAs, and tRNAs when they are encoded in the rRNA operon. Processes pre-crRNA and tracrRNA of type II CRISPR loci if present in the organism. This Clostridium tetani (strain Massachusetts / E88) protein is Ribonuclease 3.